The chain runs to 830 residues: MGLGLLLPLLLLWTRGTQGSELDPKGQHVCVASSPSAELQCCAGWRQKDQECTIPICEGPDACQKDEVCVKPGLCRCKPGFFGAHCSSRCPGQYWGPDCRESCPCHPHGQCEPATGACQCQADRWGARCEFPCACGPHGRCDPATGVCHCEPGWWSSTCRRPCQCNTAAARCEQATGACVCKPGWWGRRCSFRCNCHGSPCEQDSGRCACRPGWWGPECQQQCECVRGRCSAASGECTCPPGFRGARCELPCPAGSHGVQCAHSCGRCKHNEPCSPDTGSCESCEPGWNGTQCQQPCLPGTFGESCEQQCPHCRHGEACEPDTGHCQRCDPGWLGPRCEDPCPTGTFGEDCGSTCPTCVQGSCDTVTGDCVCSAGYWGPSCNASCPAGFHGNNCSVPCECPEGLCHPVSGSCQPGSGSRDTALIAGSLVPLLLLFLGLACCACCCWAPRSDLKDRPARDGATVSRMKLQVWGTLTSLGSTLPCRSLSSHKLPWVTVSHHDPEVPFNHSFIEPPSAGWATDDSFSSDPESGEADEVPAYCVPPQEGMVPVAQAGSSEASLAAGAFPPPEDASTPFAIPRTSSLARAKRPSVSFAEGTKFAPQSRRSSGELSSPLRKPKRLSRGAQSGPEGREAEESTGPEEAEAPESFPAAASPGDSATGHRRPPLGGRTVAEHVEAIEGSVQESSGPVTTIYMLAGKPRGSEGPVRSVFRHFGSFQKGQAEAKVKRAIPKPPRQALNRKKGSPGLASGSVGQSPNSAPKAGLPGATGPMAVRPEEAVRGLGAGTESSRRAQEPVSGCGSPEQDPQKQAEEERQEEPEYENVVPISRPPEP.

The first 19 residues, 1–19 (MGLGLLLPLLLLWTRGTQG), serve as a signal peptide directing secretion. Over 20–421 (SELDPKGQHV…CQPGSGSRDT (402 aa)) the chain is Extracellular. EGF-like domains lie at 53–87 (TIPICEGPDACQKDEVCVKPGLCRCKPGFFGAHCS), 95–130 (WGPDCRESCPCHPHGQCEPATGACQCQADRWGARCE), 155–191 (WSSTCRRPCQCNTAAARCEQATGACVCKPGWWGRRCS), and 215–249 (WGPECQQQCECVRGRCSAASGECTCPPGFRGARCE). Intrachain disulfides connect cysteine 57/cysteine 69, cysteine 63/cysteine 75, cysteine 77/cysteine 86, cysteine 99/cysteine 111, cysteine 105/cysteine 118, cysteine 120/cysteine 129, cysteine 159/cysteine 172, cysteine 165/cysteine 179, cysteine 181/cysteine 190, cysteine 219/cysteine 230, cysteine 225/cysteine 237, and cysteine 239/cysteine 248. An N-linked (GlcNAc...) asparagine glycan is attached at asparagine 289. EGF-like domains are found at residues 302-339 (FGESCEQQCPHCRHGEACEPDTGHCQRCDPGWLGPRCE) and 351-382 (CGSTCPTCVQGSCDTVTGDCVCSAGYWGPSCN). Disulfide bonds link cysteine 306-cysteine 319, cysteine 313-cysteine 326, cysteine 329-cysteine 338, cysteine 355-cysteine 363, cysteine 358-cysteine 370, and cysteine 372-cysteine 381. Asparagine 382 and asparagine 393 each carry an N-linked (GlcNAc...) asparagine glycan. Residues 422–442 (ALIAGSLVPLLLLFLGLACCA) form a helical membrane-spanning segment. Residues 443 to 830 (CCCWAPRSDL…VVPISRPPEP (388 aa)) are Cytoplasmic-facing. Disordered stretches follow at residues 516 to 539 (GWATDDSFSSDPESGEADEVPAYC), 581 to 688 (SLAR…SGPV), and 715 to 830 (FQKG…PPEP). Serine 589 and serine 606 each carry phosphoserine. Over residues 634–643 (ESTGPEEAEA) the composition is skewed to acidic residues. Low complexity predominate over residues 644–653 (PESFPAAASP).

As to quaternary structure, heterophilic interaction with SREC2 via its extracellular domain. The heterophilic interaction is suppressed by the presence of ligand such as Ac-LDL. Interacts with AVIL. As to expression, endothelial cells.

It is found in the membrane. Functionally, mediates the binding and degradation of acetylated low density lipoprotein (Ac-LDL). Mediates heterophilic interactions, suggesting a function as adhesion protein. Plays a role in the regulation of neurite-like outgrowth. The chain is Scavenger receptor class F member 1 (SCARF1) from Homo sapiens (Human).